A 282-amino-acid chain; its full sequence is Rhomboid protease GlpG (282 aa).

6 helical membrane passes run 96–116 (AGPL…WMQF), 144–164 (GLLH…WYLG), 176–196 (LFVI…LFSG), 197–217 (SHFG…WLTG), 225–242 (IGVP…LIVG), and 247–269 (FGLS…MALW). The active-site Nucleophile is the S203. Residue H256 is part of the active site.

It belongs to the peptidase S54 family.

It localises to the cell inner membrane. The enzyme catalyses Cleaves type-1 transmembrane domains using a catalytic dyad composed of serine and histidine that are contributed by different transmembrane domains.. Functionally, rhomboid-type serine protease that catalyzes intramembrane proteolysis. The polypeptide is Rhomboid protease GlpG (Photorhabdus laumondii subsp. laumondii (strain DSM 15139 / CIP 105565 / TT01) (Photorhabdus luminescens subsp. laumondii)).